A 921-amino-acid polypeptide reads, in one-letter code: Translation initiation factor IF-2 (921 aa).

Positions 1–296 (MADNNTPGDK…PGPQKQRGRL (296 aa)) are disordered. Positions 80–89 (RPSGPRPGSS) are enriched in low complexity. Over residues 116–182 (ARVRDMEERR…AKKRFGEGEA (67 aa)) the composition is skewed to basic and acidic residues. A compositionally biased stretch (low complexity) spans 183-257 (PRPATAAPQQ…LGRAPGVAAG (75 aa)). The 170-residue stretch at 417–586 (PRSPVVTVMG…MIALQADILD (170 aa)) folds into the tr-type G domain. Residues 426-433 (GHVDHGKT) are G1. 426 to 433 (GHVDHGKT) serves as a coordination point for GTP. The interval 451 to 455 (GITQH) is G2. The interval 474–477 (DTPG) is G3. GTP-binding positions include 474–478 (DTPGH) and 528–531 (NKID). The tract at residues 528-531 (NKID) is G4. Residues 564–566 (SAK) are G5.

The protein belongs to the TRAFAC class translation factor GTPase superfamily. Classic translation factor GTPase family. IF-2 subfamily.

It is found in the cytoplasm. One of the essential components for the initiation of protein synthesis. Protects formylmethionyl-tRNA from spontaneous hydrolysis and promotes its binding to the 30S ribosomal subunits. Also involved in the hydrolysis of GTP during the formation of the 70S ribosomal complex. This Bradyrhizobium sp. (strain BTAi1 / ATCC BAA-1182) protein is Translation initiation factor IF-2.